The sequence spans 293 residues: ATP synthase subunit gamma, mitochondrial (293 aa).

A mitochondrion-targeting transit peptide spans 1–21; sequence MFALRTAARPAARSVGATRNY.

As to quaternary structure, F-type ATP synthases have 2 components, the catalytic core F(1) and the membrane-embedded component F(0), linked together by a central stalk and a peripheral stalk. The central stalk, also called rotor shaft, is often seen as part of F(1). The peripheral stalk is seen as part of F(0). F(0) contains the membrane channel next to the rotor. F-type ATP synthases form dimers but each monomer functions independently in ATP generation. The dimer consists of 17 different polypeptides: ATP1 (subunit alpha, 3 molecules per monomer, part of F(1)), ATP2 (subunit beta, 3 copies per monomer, part of F(1)), ATP3 (subunit gamma, part of the central stalk), ATP4 (subunit b, part of the peripheral stalk), ATP5/OSCP (subunit 5/OSCP, part of the peripheral stalk), ATP6 (subunit a, part of the peripheral stalk), ATP7 (subunit d, part of the peripheral stalk), ATP8 (subunit 8, part of the peripheral stalk), OLI1 (subunit c, part of the rotor, 10 molecules per monomer), ATP14 (subunit h, part of the peripheral stalk), ATP15 (subunit epsilon, part of the central stalk), ATP16 (subunit delta, part of the central stalk), ATP17 (subunit f, part of the peripheral stalk), ATP18 (subunit i/j, part of the peripheral stalk), ATP19 (subunit k, dimer-specific, at interface between monomers), ATP20 (subunit g, at interface between monomers), TIM11 (subunit e, at interface between monomers).

It localises to the mitochondrion inner membrane. Its function is as follows. Mitochondrial membrane ATP synthase (F(1)F(0) ATP synthase or Complex V) produces ATP from ADP in the presence of a proton gradient across the membrane which is generated by electron transport complexes of the respiratory chain. F-type ATP synthases consist of two structural domains, F(1) - containing the extramembraneous catalytic core, and F(0) - containing the membrane proton channel, linked together by a central stalk and a peripheral stalk. During catalysis, ATP synthesis in the catalytic domain of F(1) is coupled via a rotary mechanism of the central stalk subunits to proton translocation. Part of the complex F(1) domain and the central stalk which is part of the complex rotary element. The gamma/ATP3 subunit protrudes into the catalytic domain formed of alpha/ATP1(3)beta/ATP2(3). Rotation of the central stalk against the surrounding alpha/ATP1(3)beta/ATP2(3) subunits leads to hydrolysis of ATP in three separate catalytic sites on the beta/ATP2 subunits. In Yarrowia lipolytica (strain CLIB 122 / E 150) (Yeast), this protein is ATP synthase subunit gamma, mitochondrial.